We begin with the raw amino-acid sequence, 108 residues long: Small proline-rich protein 5 (108 aa).

Residues 1–13 (MSQQKQKQCAPPQ) are compositionally biased toward low complexity. 2 disordered regions span residues 1–24 (MSQQKQKQCAPPQQCCPPPQQRCP) and 73–108 (PPPQQTKQPCQPPPKCQEPCAPKCPPPQQCQTSKQK). Pro residues-rich tracts occupy residues 14–24 (QCCPPPQQRCP) and 73–100 (PPPQQTKQPCQPPPKCQEPCAPKCPPPQ).

Functionally, positively regulates keratinocyte differentiation by inducing genes associated with epidermal differentiation. In Homo sapiens (Human), this protein is Small proline-rich protein 5.